We begin with the raw amino-acid sequence, 30 residues long: Dermonecrotic toxin LlSicTox-alphaIII-1 (30 aa).

H12 is an active-site residue.

It belongs to the arthropod phospholipase D family. Class I subfamily. Mg(2+) serves as cofactor. In terms of processing, contains 1 disulfide bond. In terms of tissue distribution, expressed by the venom gland.

It is found in the secreted. The catalysed reaction is an N-(acyl)-sphingosylphosphocholine = an N-(acyl)-sphingosyl-1,3-cyclic phosphate + choline. It catalyses the reaction an N-(acyl)-sphingosylphosphoethanolamine = an N-(acyl)-sphingosyl-1,3-cyclic phosphate + ethanolamine. It carries out the reaction a 1-acyl-sn-glycero-3-phosphocholine = a 1-acyl-sn-glycero-2,3-cyclic phosphate + choline. The enzyme catalyses a 1-acyl-sn-glycero-3-phosphoethanolamine = a 1-acyl-sn-glycero-2,3-cyclic phosphate + ethanolamine. Dermonecrotic toxins cleave the phosphodiester linkage between the phosphate and headgroup of certain phospholipids (sphingolipid and lysolipid substrates), forming an alcohol (often choline) and a cyclic phosphate. This toxin acts on sphingomyelin (SM). It may also act on ceramide phosphoethanolamine (CPE), lysophosphatidylcholine (LPC) and lysophosphatidylethanolamine (LPE), but not on lysophosphatidylserine (LPS), and lysophosphatidylglycerol (LPG). It acts by transphosphatidylation, releasing exclusively cyclic phosphate products as second products. In vivo, intradermal injection induces dermonecrosis. Induces hemolysis, increased vascular permeability, edema, inflammatory response, and platelet aggregation. In Loxosceles laeta (South American recluse spider), this protein is Dermonecrotic toxin LlSicTox-alphaIII-1.